A 747-amino-acid chain; its full sequence is Polyribonucleotide nucleotidyltransferase (747 aa).

The Mg(2+) site is built by D487 and D493. The 60-residue stretch at 554-613 (PSTTTIKIDKDKIRDVIGPGGKVIKEICETSDAKIDISDDGTVSVYASDRDKLKVALDKI) folds into the KH domain. The S1 motif domain maps to 623 to 691 (GEIFNGTVMK…NKGKAKLTIK (69 aa)). Residues 691 to 747 (KNADKDKSSNNPKQKNNVNNSKENSEPERRDSSKKRAWNEDNNSDTTEVITERKYFN) are disordered. The segment covering 699–712 (SNNPKQKNNVNNSK) has biased composition (low complexity). A compositionally biased stretch (polar residues) spans 730–739 (EDNNSDTTEV).

The protein belongs to the polyribonucleotide nucleotidyltransferase family. Mg(2+) is required as a cofactor.

Its subcellular location is the cytoplasm. The catalysed reaction is RNA(n+1) + phosphate = RNA(n) + a ribonucleoside 5'-diphosphate. Its function is as follows. Involved in mRNA degradation. Catalyzes the phosphorolysis of single-stranded polyribonucleotides processively in the 3'- to 5'-direction. The protein is Polyribonucleotide nucleotidyltransferase of Rickettsia akari (strain Hartford).